Consider the following 666-residue polypeptide: Probable potassium transport system protein Kup (666 aa).

A run of 12 helical transmembrane segments spans residues glycine 16 to methionine 36, isoleucine 58 to leucine 78, proline 100 to threonine 120, isoleucine 141 to glycine 161, phenylalanine 165 to leucine 185, isoleucine 221 to leucine 241, tryptophan 253 to alanine 273, valine 294 to glycine 314, leucine 343 to phenylalanine 363, tyrosine 373 to isoleucine 393, proline 399 to alanine 419, and phenylalanine 424 to isoleucine 444.

Belongs to the HAK/KUP transporter (TC 2.A.72) family.

Its subcellular location is the cell membrane. It carries out the reaction K(+)(in) + H(+)(in) = K(+)(out) + H(+)(out). In terms of biological role, transport of potassium into the cell. Likely operates as a K(+):H(+) symporter. The protein is Probable potassium transport system protein Kup of Streptococcus pyogenes serotype M6 (strain ATCC BAA-946 / MGAS10394).